The sequence spans 628 residues: ATP-dependent zinc metalloprotease FtsH (628 aa).

Residues 1 to 7 (MKLSWKT) are Stromal-facing. A helical transmembrane segment spans residues 8–28 (LLLWSLPIFVIGFFFWQGFLG). At 29–118 (PTTTDVGSNI…AHPPKSTSAV (90 aa)) the chain is on the lumenal side. Residues 119 to 139 (WGLLGNLLFPLLLVGGLAFLF) form a helical membrane-spanning segment. Topologically, residues 140 to 628 (RRSNNASGGP…PEKNYYISQF (489 aa)) are stromal. An ATP-binding site is contributed by 213 to 220 (GPPGTGKT). Histidine 434 is a Zn(2+) binding site. Residue glutamate 435 is part of the active site. Residues histidine 438 and aspartate 512 each coordinate Zn(2+).

This sequence in the central section; belongs to the AAA ATPase family. In the C-terminal section; belongs to the peptidase M41 family. In terms of assembly, homohexamer. Zn(2+) is required as a cofactor.

The protein resides in the plastid. The protein localises to the chloroplast thylakoid membrane. Acts as a processive, ATP-dependent zinc metallopeptidase. This Pyropia yezoensis (Susabi-nori) protein is ATP-dependent zinc metalloprotease FtsH.